Consider the following 551-residue polypeptide: Terpene synthase 10 (551 aa).

Positions 303, 307, and 455 each coordinate Mg(2+). The DDXXD motif motif lies at 303 to 307; sequence DDIYD.

The protein belongs to the terpene synthase family. Requires Mg(2+) as cofactor.

Functionally, catalyzes the cyclization of farnesyl diphosphate to sesquiterpene olefins. In Ricinus communis (Castor bean), this protein is Terpene synthase 10 (TPS10).